Consider the following 113-residue polypeptide: Large ribosomal subunit protein bL17 (113 aa).

The protein belongs to the bacterial ribosomal protein bL17 family. In terms of assembly, part of the 50S ribosomal subunit. Contacts protein L32.

This is Large ribosomal subunit protein bL17 from Caldicellulosiruptor saccharolyticus (strain ATCC 43494 / DSM 8903 / Tp8T 6331).